A 451-amino-acid chain; its full sequence is Bacteriochlorophyllide d C-8(2)-methyltransferase (451 aa).

In terms of domain architecture, B12-binding spans 1–118; that stretch reads MDDDSNQKPL…DDVANNRLKE (118 aa). One can recognise a Radical SAM core domain in the interval 148-377; it reads VDGTKSIPIY…ALHLVIKSDR (230 aa). [4Fe-4S] cluster is bound by residues Cys-162, Cys-166, and Cys-169.

This sequence belongs to the radical SAM superfamily. The cofactor is [4Fe-4S] cluster.

The protein resides in the cytoplasm. It catalyses the reaction 8,12-diethyl-3-vinylbacteriochlorophyllide d + S-adenosyl-L-methionine = 12-ethyl-8-propyl-3-vinylbacteriochlorophyllide d + S-adenosyl-L-homocysteine + H(+). The enzyme catalyses 12-ethyl-8-propyl-3-vinylbacteriochlorophyllide d + S-adenosyl-L-methionine = 12-ethyl-8-isobutyl-3-vinylbacteriochlorophyllide d + S-adenosyl-L-homocysteine + H(+). The protein operates within porphyrin-containing compound metabolism; bacteriochlorophyll biosynthesis (light-independent). Functionally, involved in the biosynthesis of the major light-harvesting pigment bacteriochlorophyll c (BChlc), which confers a significant competitive advantage to green sulfur bacteria living at limiting red and near-infrared light intensities. BchQ is a methyltransferase that adds two consecutive methyl groups to the ethyl carbon at the C-8(2) position of 8,12-diethyl-3-vinylbacteriochlorophyllide d to yield 12-ethyl-8-isobutyl-3-vinylbacteriochlorophyllide d. The chain is Bacteriochlorophyllide d C-8(2)-methyltransferase from Chlorobaculum tepidum (strain ATCC 49652 / DSM 12025 / NBRC 103806 / TLS) (Chlorobium tepidum).